Here is a 144-residue protein sequence, read N- to C-terminus: Transcriptional regulator SlyA (144 aa).

One can recognise an HTH marR-type domain in the interval 2 to 135 (ESTLGSDLAR…LVGLIGKLEQ (134 aa)). The segment at residues 49-72 (QIQLAKAIGIEQPSLVRTLDQLEE) is a DNA-binding region (H-T-H motif).

It belongs to the SlyA family. As to quaternary structure, homodimer.

Its function is as follows. Transcription regulator that can specifically activate or repress expression of target genes. The chain is Transcriptional regulator SlyA from Serratia proteamaculans (strain 568).